Reading from the N-terminus, the 389-residue chain is PqqA peptide cyclase (389 aa).

In terms of domain architecture, Radical SAM core spans 19–235 (VGLPLWLLAE…NEYRVRLEAE (217 aa)). [4Fe-4S] cluster is bound by residues cysteine 33, cysteine 37, and cysteine 40.

The protein belongs to the radical SAM superfamily. PqqE family. In terms of assembly, interacts with PqqD. The interaction is necessary for activity of PqqE. The cofactor is [4Fe-4S] cluster.

It carries out the reaction [PQQ precursor protein] + S-adenosyl-L-methionine = E-Y cross-linked-[PQQ precursor protein] + 5'-deoxyadenosine + L-methionine + H(+). It functions in the pathway cofactor biosynthesis; pyrroloquinoline quinone biosynthesis. Functionally, catalyzes the cross-linking of a glutamate residue and a tyrosine residue in the PqqA protein as part of the biosynthesis of pyrroloquinoline quinone (PQQ). The chain is PqqA peptide cyclase from Pseudomonas savastanoi pv. phaseolicola (strain 1448A / Race 6) (Pseudomonas syringae pv. phaseolicola (strain 1448A / Race 6)).